The primary structure comprises 378 residues: Protein RecA (378 aa).

66 to 73 (GPESSGKT) provides a ligand contact to ATP. The disordered stretch occupies residues 333–378 (PDAAKAEAATDAAAAADTAGTDDAAKSVPAPASKTAKATKATAVKS). Residues 338 to 378 (AEAATDAAAAADTAGTDDAAKSVPAPASKTAKATKATAVKS) show a composition bias toward low complexity.

This sequence belongs to the RecA family.

It localises to the cytoplasm. Can catalyze the hydrolysis of ATP in the presence of single-stranded DNA, the ATP-dependent uptake of single-stranded DNA by duplex DNA, and the ATP-dependent hybridization of homologous single-stranded DNAs. It interacts with LexA causing its activation and leading to its autocatalytic cleavage. This Streptomyces venezuelae (strain ATCC 10712 / CBS 650.69 / DSM 40230 / JCM 4526 / NBRC 13096 / PD 04745) protein is Protein RecA.